A 1043-amino-acid chain; its full sequence is Constitutive coactivator of PPAR-gamma-like protein 1 homolog (1043 aa).

Disordered regions lie at residues 353-497 (SMVP…HMQI) and 929-1043 (YGRG…NKEE). 2 stretches are compositionally biased toward polar residues: residues 362–375 (QMLN…QSRP) and 405–419 (SPIN…NHVD). Composition is skewed to basic and acidic residues over residues 451–471 (TWDK…EQAK) and 951–964 (EVAK…EDSK). An RNA binding region spans residues 801–1043 (VELATKVEKM…LEGAVANKEE (243 aa)). A compositionally biased stretch (low complexity) spans 995–1010 (EARASSNSESALSSDS).

Belongs to the constitutive coactivator of PPAR-gamma family.

The protein resides in the cytoplasm. Its subcellular location is the cell membrane. Functionally, may bee involved in the oxidative stress-induced survival signaling. Binds RNA. May participate in mRNA transport in the cytoplasm. The chain is Constitutive coactivator of PPAR-gamma-like protein 1 homolog (fam120a) from Xenopus tropicalis (Western clawed frog).